The following is a 94-amino-acid chain: DNA-binding protein HU (94 aa).

Residues 56 to 94 (QKGKEGKVPGSDKTYKTEDKRVPKFKPGKTLKQKVEEGK) form a disordered region. Residues 68–77 (KTYKTEDKRV) show a composition bias toward basic and acidic residues. Residues 78–87 (PKFKPGKTLK) show a composition bias toward basic residues.

This sequence belongs to the bacterial histone-like protein family. As to quaternary structure, homodimer.

Its function is as follows. Histone-like DNA-binding protein which is capable of wrapping DNA to stabilize it, and thus to prevent its denaturation under extreme environmental conditions. The protein is DNA-binding protein HU (hup) of Helicobacter pylori (strain ATCC 700392 / 26695) (Campylobacter pylori).